Reading from the N-terminus, the 952-residue chain is Valine--tRNA ligase (952 aa).

Residues 42–52 (PNVTGSLHMGH) carry the 'HIGH' region motif. The 'KMSKS' region motif lies at 554-558 (KMSKS). Lys557 contributes to the ATP binding site. The stretch at 888–952 (AELARLDGEI…EEQKKTIAAL (65 aa)) forms a coiled coil.

Belongs to the class-I aminoacyl-tRNA synthetase family. ValS type 1 subfamily. As to quaternary structure, monomer.

It localises to the cytoplasm. The catalysed reaction is tRNA(Val) + L-valine + ATP = L-valyl-tRNA(Val) + AMP + diphosphate. Its function is as follows. Catalyzes the attachment of valine to tRNA(Val). As ValRS can inadvertently accommodate and process structurally similar amino acids such as threonine, to avoid such errors, it has a 'posttransfer' editing activity that hydrolyzes mischarged Thr-tRNA(Val) in a tRNA-dependent manner. The polypeptide is Valine--tRNA ligase (Vibrio parahaemolyticus serotype O3:K6 (strain RIMD 2210633)).